Reading from the N-terminus, the 290-residue chain is tRNA(Ile)-lysidine synthase, chloroplastic (290 aa).

33–38 (SGGQDS) provides a ligand contact to ATP.

It belongs to the tRNA(Ile)-lysidine synthase family.

It is found in the plastid. The protein resides in the chloroplast. The enzyme catalyses cytidine(34) in tRNA(Ile2) + L-lysine + ATP = lysidine(34) in tRNA(Ile2) + AMP + diphosphate + H(+). Ligates lysine onto the cytidine present at position 34 of the AUA codon-specific tRNA(Ile) that contains the anticodon CAU, in an ATP-dependent manner. Cytidine is converted to lysidine, thus changing the amino acid specificity of the tRNA from methionine to isoleucine. This Cyanidioschyzon merolae (strain NIES-3377 / 10D) (Unicellular red alga) protein is tRNA(Ile)-lysidine synthase, chloroplastic.